A 724-amino-acid polypeptide reads, in one-letter code: Catalase-peroxidase (724 aa).

A cross-link (tryptophyl-tyrosyl-methioninium (Trp-Tyr) (with M-251)) is located at residues 96 to 225 (WHAAGTYRVA…LAAVMMGLIY (130 aa)). Histidine 97 acts as the Proton acceptor in catalysis. The segment at residues 225–251 (YVNPEGVDGNPDPLRTAEDVRITFERM) is a cross-link (tryptophyl-tyrosyl-methioninium (Tyr-Met) (with W-96)). Histidine 266 is a binding site for heme b.

This sequence belongs to the peroxidase family. Peroxidase/catalase subfamily. As to quaternary structure, homodimer or homotetramer. The cofactor is heme b. In terms of processing, formation of the three residue Trp-Tyr-Met cross-link is important for the catalase, but not the peroxidase activity of the enzyme.

The catalysed reaction is H2O2 + AH2 = A + 2 H2O. The enzyme catalyses 2 H2O2 = O2 + 2 H2O. Its function is as follows. Bifunctional enzyme with both catalase and broad-spectrum peroxidase activity. The sequence is that of Catalase-peroxidase from Halorhodospira halophila (strain DSM 244 / SL1) (Ectothiorhodospira halophila (strain DSM 244 / SL1)).